We begin with the raw amino-acid sequence, 867 residues long: V-set and immunoglobulin domain-containing protein 10-like (867 aa).

Residues 1–27 form the signal peptide; it reads MDNPQALPLFLLLASLVGILTLRASSG. The Extracellular segment spans residues 28–776; sequence LQQTNFSSAF…RAGPTLSHGA (749 aa). N32 is a glycosylation site (N-linked (GlcNAc...) asparagine). The span at 35–45 shows a compositional bias: low complexity; that stretch reads SAFSSDSKSSS. The interval 35-60 is disordered; it reads SAFSSDSKSSSQGLGVEVPSIKPPSW. 3 N-linked (GlcNAc...) asparagine glycosylation sites follow: N88, N96, and N144. Residues 104–186 form a disordered region; that stretch reads LSPVSPFSET…PESKFSAETH (83 aa). The segment covering 137-153 has biased composition (polar residues); the sequence is TVKTPASNISTQVSHTK. A compositionally biased stretch (basic and acidic residues) spans 159–170; sequence PDSKFSPDDMDL. Over residues 173–186 the composition is skewed to polar residues; sequence SAQSPESKFSAETH. Ig-like C2-type domains follow at residues 302-394 and 402-487; these read PQLS…ADVS and PTIT…SLLN. The cysteines at positions 324 and 378 are disulfide-linked. N-linked (GlcNAc...) asparagine glycosylation occurs at N423. Residues C428 and C471 are joined by a disulfide bond. Residue N487 is glycosylated (N-linked (GlcNAc...) asparagine). A disordered region spans residues 602–627; sequence ASGCPPPSRASWAREGRPLAPGGGSR. N-linked (GlcNAc...) asparagine glycosylation is found at N641 and N650. A helical membrane pass occupies residues 777-797; the sequence is IAGIVLGSLLGLALLAVLLLL. Residues 798–867 are Cytoplasmic-facing; the sequence is CICCLCRFRG…QAQTPVQLSL (70 aa).

In terms of tissue distribution, expressed in the esophagus, particularly in the suprabasilar layers of the epithelium. Expression is largely reduced in esophageal metaplasia, dysplasia, and adenocarcinoma lesions.

Its subcellular location is the membrane. In Homo sapiens (Human), this protein is V-set and immunoglobulin domain-containing protein 10-like (VSIG10L).